Reading from the N-terminus, the 138-residue chain is Small ribosomal subunit protein uS11 (138 aa).

Over residues 1–12 (MPPKKANAAGPK) the composition is skewed to low complexity. The disordered stretch occupies residues 1-23 (MPPKKANAAGPKKGQKTRKREKK). The span at 13 to 22 (KGQKTRKREK) shows a compositional bias: basic residues.

Belongs to the universal ribosomal protein uS11 family. As to quaternary structure, part of the 30S ribosomal subunit. Interacts with proteins S7 and S18. Binds to IF-3.

Located on the platform of the 30S subunit, it bridges several disparate RNA helices of the 16S rRNA. Forms part of the Shine-Dalgarno cleft in the 70S ribosome. This is Small ribosomal subunit protein uS11 from Mycobacterium leprae (strain Br4923).